Reading from the N-terminus, the 339-residue chain is Heat-inducible transcription repressor HrcA (339 aa).

This sequence belongs to the HrcA family.

Its function is as follows. Negative regulator of class I heat shock genes (grpE-dnaK-dnaJ and groELS operons). Prevents heat-shock induction of these operons. The sequence is that of Heat-inducible transcription repressor HrcA from Thermotoga neapolitana (strain ATCC 49049 / DSM 4359 / NBRC 107923 / NS-E).